Here is a 162-residue protein sequence, read N- to C-terminus: NADH-quinone oxidoreductase subunit I (162 aa).

2 4Fe-4S ferredoxin-type domains span residues 53–83 and 93–122; these read LRRYPNGEERCIACKLCEAVCPAQAITIESE and TRYDIDMTKCIYCGFCQEACPVDAIVEGPN. [4Fe-4S] cluster contacts are provided by C63, C66, C69, C73, C102, C105, C108, and C112.

Belongs to the complex I 23 kDa subunit family. In terms of assembly, NDH-1 is composed of 14 different subunits. Subunits NuoA, H, J, K, L, M, N constitute the membrane sector of the complex. The cofactor is [4Fe-4S] cluster.

The protein localises to the cell inner membrane. The enzyme catalyses a quinone + NADH + 5 H(+)(in) = a quinol + NAD(+) + 4 H(+)(out). NDH-1 shuttles electrons from NADH, via FMN and iron-sulfur (Fe-S) centers, to quinones in the respiratory chain. The immediate electron acceptor for the enzyme in this species is believed to be ubiquinone. Couples the redox reaction to proton translocation (for every two electrons transferred, four hydrogen ions are translocated across the cytoplasmic membrane), and thus conserves the redox energy in a proton gradient. The protein is NADH-quinone oxidoreductase subunit I of Erythrobacter litoralis (strain HTCC2594).